The primary structure comprises 371 residues: 4-hydroxy-3-methylbut-2-en-1-yl diphosphate synthase (flavodoxin) (371 aa).

[4Fe-4S] cluster contacts are provided by cysteine 272, cysteine 275, cysteine 307, and glutamate 314.

It belongs to the IspG family. [4Fe-4S] cluster is required as a cofactor.

The enzyme catalyses (2E)-4-hydroxy-3-methylbut-2-enyl diphosphate + oxidized [flavodoxin] + H2O + 2 H(+) = 2-C-methyl-D-erythritol 2,4-cyclic diphosphate + reduced [flavodoxin]. It participates in isoprenoid biosynthesis; isopentenyl diphosphate biosynthesis via DXP pathway; isopentenyl diphosphate from 1-deoxy-D-xylulose 5-phosphate: step 5/6. Its function is as follows. Converts 2C-methyl-D-erythritol 2,4-cyclodiphosphate (ME-2,4cPP) into 1-hydroxy-2-methyl-2-(E)-butenyl 4-diphosphate. The protein is 4-hydroxy-3-methylbut-2-en-1-yl diphosphate synthase (flavodoxin) of Magnetococcus marinus (strain ATCC BAA-1437 / JCM 17883 / MC-1).